Here is a 380-residue protein sequence, read N- to C-terminus: Cytochrome b (380 aa).

The next 4 helical transmembrane spans lie at 34–54 (FGSL…LLAM), 78–99 (WLIR…YLHI), 114–134 (WNTG…GYVL), and 179–199 (FFAL…IHLT). The heme b site is built by His-84 and His-98. His-183 and His-197 together coordinate heme b. His-202 provides a ligand contact to a ubiquinone. Transmembrane regions (helical) follow at residues 227-247 (TKDI…AMFA), 289-309 (LGGV…PFLH), 321-341 (LSQL…WIGS), and 348-368 (FIIT…ILFP).

Belongs to the cytochrome b family. As to quaternary structure, the cytochrome bc1 complex contains 11 subunits: 3 respiratory subunits (MT-CYB, CYC1 and UQCRFS1), 2 core proteins (UQCRC1 and UQCRC2) and 6 low-molecular weight proteins (UQCRH/QCR6, UQCRB/QCR7, UQCRQ/QCR8, UQCR10/QCR9, UQCR11/QCR10 and a cleavage product of UQCRFS1). This cytochrome bc1 complex then forms a dimer. Heme b serves as cofactor.

The protein localises to the mitochondrion inner membrane. Its function is as follows. Component of the ubiquinol-cytochrome c reductase complex (complex III or cytochrome b-c1 complex) that is part of the mitochondrial respiratory chain. The b-c1 complex mediates electron transfer from ubiquinol to cytochrome c. Contributes to the generation of a proton gradient across the mitochondrial membrane that is then used for ATP synthesis. The protein is Cytochrome b (MT-CYB) of Aphanotriccus audax (Black-billed flycatcher).